The following is a 476-amino-acid chain: Proline--tRNA ligase 2 (476 aa).

It belongs to the class-II aminoacyl-tRNA synthetase family. ProS type 3 subfamily. Homodimer.

It is found in the cytoplasm. The enzyme catalyses tRNA(Pro) + L-proline + ATP = L-prolyl-tRNA(Pro) + AMP + diphosphate. Catalyzes the attachment of proline to tRNA(Pro) in a two-step reaction: proline is first activated by ATP to form Pro-AMP and then transferred to the acceptor end of tRNA(Pro). The protein is Proline--tRNA ligase 2 of Bacillus thuringiensis subsp. konkukian (strain 97-27).